Here is an 89-residue protein sequence, read N- to C-terminus: Acylphosphatase (89 aa).

In terms of domain architecture, Acylphosphatase-like spans 3–89 (QKHLQVFGTV…SEDFSDFKSI (87 aa)). Active-site residues include arginine 18 and asparagine 36.

This sequence belongs to the acylphosphatase family.

It carries out the reaction an acyl phosphate + H2O = a carboxylate + phosphate + H(+). In Staphylococcus haemolyticus (strain JCSC1435), this protein is Acylphosphatase (acyP).